A 256-amino-acid chain; its full sequence is L-erythrulose-1-phosphate isomerase (256 aa).

Residue His-96 is the Electrophile of the active site. Glu-169 functions as the Proton acceptor in the catalytic mechanism. Residues Gly-175 and Ser-212 each contribute to the substrate site.

Belongs to the triosephosphate isomerase family. In terms of assembly, homodimer.

It is found in the cytoplasm. It carries out the reaction L-erythrulose 1-phosphate = D-erythrulose 4-phosphate. The protein operates within carbohydrate metabolism; erythritol degradation. Catalyzes the isomerization of D-erythrulose-4P to L-erythrulose-1P. Involved in the degradation pathway of erythritol, that allows B.abortus to grow on this compound as the sole carbon source. The polypeptide is L-erythrulose-1-phosphate isomerase (Brucella abortus (strain 2308)).